Consider the following 314-residue polypeptide: PDCD10 and GCKIII kinases-associated protein 1 (314 aa).

Ser-30 bears the Phosphoserine mark. Residues 36 to 142 (DDTDKLKGKW…TQPFLEGGGT (107 aa)) form a disordered region. The residue at position 106 (Thr-106) is a Phosphothreonine. Residues 107–116 (PQPTGNSSPT) are compositionally biased toward polar residues. Phosphoserine occurs at positions 238 and 241. The interval 267–291 (VDSGNRQEDTHGSDGDGDGEIVDED) is disordered. Basic and acidic residues predominate over residues 271–280 (NRQEDTHGSD). A compositionally biased stretch (acidic residues) spans 281–291 (GDGDGEIVDED).

As to quaternary structure, interacts with KEAP1; this interaction prevents the ubiquitination of KEAP1 by TRIM25, thus protecting KEAP1 from degradation. Found in association with PDCD10 and members of the STE20 kinases, such as STK24, STK25 and STK26.

The protein localises to the cell membrane. In terms of biological role, acts as a tumor suppressor. Acts as a tumor suppressor for colorectal cancer cell proliferation by targeting KEAP1/USP17/ELK1/CDK6 axis. The polypeptide is PDCD10 and GCKIII kinases-associated protein 1 (Homo sapiens (Human)).